Consider the following 337-residue polypeptide: Prenyltransferase terC (337 aa).

Mg(2+)-binding residues include D111 and D115.

This sequence belongs to the FPP/GGPP synthase family. Mg(2+) serves as cofactor.

Its pathway is secondary metabolite biosynthesis. Its function is as follows. Prenyltransferase; part of the gene cluster that mediates the biosynthesis of terpendoles, indole-diterpene (IDT) mycotoxins including terpendole I, terpendole K, terpendole C, as well as the kinesin Eg5 inhibitor terpendole E. Terpendoles biosynthesis begins with the synthesis of geranylgeranyl diphosphate (GGPP) by a yet unidentified GGPP synthase. Condensation of indole-3-glycerol phosphate with GGPP by the prenyltransferase terC then forms 3-geranylgeranylindole (3-GGI), followed by epoxidation and cyclization of this intermediate (by the FAD-dependent monooxygeanse terM and the terpene cyclase terB) to form paspaline. The cytochrome monooxygenase terQ then hydroxylates paspalline at C-11 to yield terpendole E. The cytochrome monooxygenase terP converts terpendole E to 13-desoxyterpendole I, and terQ converts 13-desoxyterpendole I into terpendole I. TerF and terK are required for conversion of terpendole I to terpendole C which is further converted to terpendole K. This chain is Prenyltransferase terC, found in Tolypocladium album (Soil fungus).